The sequence spans 234 residues: Iron-sulfur cluster co-chaperone protein HscB (234 aa).

4 residues coordinate a divalent metal cation: C40, C43, C57, and C60. The 73-residue stretch at 71-143 (DYFSLMNCNR…LTRGLYLLKL (73 aa)) folds into the J domain.

Belongs to the HscB family. Interacts with ISCU and HSPA9 to form an iron-sulfur transfer complex. Interacts with SDHAF1 (via the first LYR motif); the interaction recruits the iron-sulfur transfer complex composed of HSC20, HSPA9 and ISCU and mediates the incorporation of iron-sulfur clusters into SDHB which also interacts with HSC20. Interacts with the cytoplasmic form of ISCU and with CIA complex member CIAO1 (via LYR motif). As to quaternary structure, homodimer. Interacts with ISCU (cytoplasmic form); this interaction stabilizes the (Fe-S) clusters on ISCU. Interacts with the CIA complex member CIAO1 (via LYR motif).

It localises to the cytoplasm. Its subcellular location is the mitochondrion. It functions in the pathway cofactor biosynthesis; iron-sulfur cluster biosynthesis. Functionally, acts as a co-chaperone in iron-sulfur cluster assembly in mitochondria. Required for incorporation of iron-sulfur clusters into SDHB, the iron-sulfur protein subunit of succinate dehydrogenase that is involved in complex II of the mitochondrial electron transport chain. Recruited to SDHB by interaction with SDHAF1 which first binds SDHB and then recruits the iron-sulfur transfer complex formed by HSC20, HSPA9 and ISCU through direct binding to HSC20. Plays an essential role in hematopoiesis. Acts as a co-chaperone in iron-sulfur cluster assembly in the cytoplasm. Also mediates complex formation between components of the cytosolic iron-sulfur biogenesis pathway and the CIA targeting complex composed of CIAO1, DIPK1B/FAM69B and MMS19 by binding directly to the scaffold protein ISCU and to CIAO1. This facilitates iron-sulfur cluster insertion into a number of cytoplasmic and nuclear proteins including POLD1, ELP3, DPYD and PPAT. This Mus musculus (Mouse) protein is Iron-sulfur cluster co-chaperone protein HscB.